Here is a 417-residue protein sequence, read N- to C-terminus: Secreted aspartic protease 4 (417 aa).

The first 18 residues, 1–18 (MFLQNILSVLAFALLIDA), serve as a signal peptide directing secretion. Residues 19-75 (APVKRSTGFVTLDFNVKRSLVDPKDPTVEVKRSPLFLDIEPTEIPVDDTGRNDVGKR) constitute a propeptide, activation peptide. The Peptidase A1 domain maps to 89–403 (YSADITIGSN…DLDDRKISMA (315 aa)). The active site involves Asp107. A pepstatin A-binding site is contributed by 107–109 (DTG). Cys122 and Cys134 form a disulfide bridge. N-linked (GlcNAc...) asparagine glycosylation is present at Asn137. 160 to 161 (AD) serves as a coordination point for pepstatin A. Asp267 is a binding site for Zn(2+). Asp293 is an active-site residue. Residue 293–297 (DSGTT) participates in pepstatin A binding. The cysteines at positions 331 and 369 are disulfide-linked.

Belongs to the peptidase A1 family. As to quaternary structure, monomer.

Its subcellular location is the secreted. It catalyses the reaction Preferential cleavage at the carboxyl of hydrophobic amino acids, but fails to cleave 15-Leu-|-Tyr-16, 16-Tyr-|-Leu-17 and 24-Phe-|-Phe-25 of insulin B chain. Activates trypsinogen, and degrades keratin.. Activity is inhibited by squash aspartic peptidase inhibitor (SQAPI). Secreted aspartic peptidases (SAPs) are a group of ten acidic hydrolases considered as key virulence factors. These enzymes supply the fungus with nutrient amino acids as well as are able to degrade the selected host's proteins involved in the immune defense. Moreover, acts toward human hemoglobin though limited proteolysis to generate a variety of antimicrobial hemocidins, enabling to compete with the other microorganisms of the same physiological niche using the microbicidal peptides generated from the host protein. Functionally, plays a key role in defense against host by cleaving histatin-5 (Hst 5), a peptide from human saliva that carries out fungicidal activity. The cleavage rate decreases in an order of SAP2 &gt; SAP9 &gt; SAP3 &gt; SAP7 &gt; SAP4 &gt; SAP1 &gt; SAP8. The first cleavage occurs between residues 'Lys-17' and 'His-18' of Hst 5, giving DSHAKRHHGYKRKFHEK and HHSHRGY peptides. Simultaneously, the DSHAKRHHGY and KRKFHEKHHSHRGY peptides are also formed. This Candida albicans (strain SC5314 / ATCC MYA-2876) (Yeast) protein is Secreted aspartic protease 4.